Consider the following 544-residue polypeptide: Chaperonin GroEL (544 aa).

Residues 29–32 (TLGP), 86–90 (DGTTT), Gly-413, 477–479 (DVL), and Asp-493 contribute to the ATP site.

It belongs to the chaperonin (HSP60) family. In terms of assembly, forms a cylinder of 14 subunits composed of two heptameric rings stacked back-to-back. Interacts with the co-chaperonin GroES.

The protein resides in the cytoplasm. It carries out the reaction ATP + H2O + a folded polypeptide = ADP + phosphate + an unfolded polypeptide.. Functionally, together with its co-chaperonin GroES, plays an essential role in assisting protein folding. The GroEL-GroES system forms a nano-cage that allows encapsulation of the non-native substrate proteins and provides a physical environment optimized to promote and accelerate protein folding. The sequence is that of Chaperonin GroEL from Clostridium kluyveri (strain NBRC 12016).